The following is a 106-amino-acid chain: Urease subunit beta (106 aa).

This sequence belongs to the urease beta subunit family. Heterotrimer of UreA (gamma), UreB (beta) and UreC (alpha) subunits. Three heterotrimers associate to form the active enzyme.

Its subcellular location is the cytoplasm. The catalysed reaction is urea + 2 H2O + H(+) = hydrogencarbonate + 2 NH4(+). Its pathway is nitrogen metabolism; urea degradation; CO(2) and NH(3) from urea (urease route): step 1/1. The polypeptide is Urease subunit beta (Acinetobacter baumannii (strain SDF)).